A 468-amino-acid polypeptide reads, in one-letter code: Proline--tRNA ligase (468 aa).

Belongs to the class-II aminoacyl-tRNA synthetase family. ProS type 3 subfamily. As to quaternary structure, homodimer.

Its subcellular location is the cytoplasm. The catalysed reaction is tRNA(Pro) + L-proline + ATP = L-prolyl-tRNA(Pro) + AMP + diphosphate. Catalyzes the attachment of proline to tRNA(Pro) in a two-step reaction: proline is first activated by ATP to form Pro-AMP and then transferred to the acceptor end of tRNA(Pro). The chain is Proline--tRNA ligase from Frankia casuarinae (strain DSM 45818 / CECT 9043 / HFP020203 / CcI3).